A 783-amino-acid polypeptide reads, in one-letter code: DNA polymerase II (783 aa).

The protein belongs to the DNA polymerase type-B family.

It catalyses the reaction DNA(n) + a 2'-deoxyribonucleoside 5'-triphosphate = DNA(n+1) + diphosphate. DNA polymerase II activity is regulated by the lexA gene during the SOS response. In terms of biological role, thought to be involved in DNA repair and/or mutagenesis. Its processivity is enhanced by the beta sliding clamp (dnaN) and clamp loader. The protein is DNA polymerase II (polB) of Escherichia coli (strain K12).